The following is a 2110-amino-acid chain: MKGHQFKSWIFELREILREIKNSHYFLDSRTQFNSVGSFSHIFFHQERFIKLFDPRIWSILLSRNSQGSTSNRYFTIKGVILFVVAVLIYRINSRNMVERKNLYLIGLLPIPMNSIGPRNDTLEESVGSSNINRLIVSLLYLPKGKKISESCFLNPKESTWVLPITKKCSMPESNWGSRWWRNWIGKKRDSSQLKGSSDQSRDPLDSISNEDSEYHTLINQREIQQLKERSILWDPSFLQTERTEIESDRFPKCLSVYSSMSRLFTEREKQMINHLLPEEIEEFLGNPTRSVRSFFSDRWSELHLGSNPTERSTRDQKLLKKQQDLSFVPSRRSEKKEMVNIFKIITYLQNTVSIHPISSYPGCDMVPKDEPDMDSSNKISFLNKNPFFDLFHLFHDRNRGGYTLHHDFESEERFQEMADLFTLSITEPDLVYHKGFAFSIDSYGLDQKQFLNEVFDSRDESKKKYLLALPPFFYEENESFYRRIRKKWVRISCGNDLEDPKPKIVVFASNNIMEAVNQYRLIRNLIQIQYSTYGYIRNVLNRFFLMNRSDRNFEYGIQRDQIGKDTLNHRTIMKYTINQHFSNLKKSQKRWFDPLILISRTERSMNRDPDAYRYKWSNGSKNFQEHLEHFVSEQKSRFQVVFDRLRINQYSIDWSEVIDKKGLSKPFRFFLSKLLFFLSNSLPFFFVSFGNIPIHRSEIYIYELKGPNDQLCNQLLESIGLQIVHLKKWKPFLLDLLDDHDTSQKSKFLINGGTISPFLFNKIPKWMIDSFHTRNNRRKSFDNTDSYFSTIFHDQDNWLNPVKPFHRSSLISSFYKANRLRFLNNPHHFCFYCNKRFPFYVEKARINNSDFTYGQFLNILFIHNKIFSLCVGKKKHAFWGRDTISPIESQVSNIFIPNDFPQSGGDETYNLYKSFHFPSRSDPFVRRAIYSIADISGTPLTEGQIVNFERTYCQPLSDMNLSDSEGKNSHQYLNFNSNMGLIHTPCSEKYLPSEKRKKRSLCLKKCVEKGQMYRTFQRDSAFSTLSKWNLFQTYMPWFLTSTGYKYLNFIFLDTFSDLLPILSLSSSQKFVSIFHDIMHGSDISWRILQKKLCLLQWKWNLISEISSKCFHNLLLSEERIHRNNESPLISTHLRSPNVREFLYSILFLLLVAGYLVCTHLLFVSWASSELQTEFEKVKSLMIPSSMIELRKLLDRYPTSEPNSFWLKNLFLVALEQLGDSLEEIRGSASGGNMLLGGDPAYGVKSIRSKKKYLNINLIDIIDLISIIPNPINRITFSRNTRHLSHTSKEIYSLIRKRKNVNGDWIDDKIESWVANSDSIDDEEREFLVQFSTLTTEKRIDQILLSLTHSDHLSKNDSGYQMIEQPGAIYLRYLVDIHKKYLMNYEFNTSCLAERRIFLAHYQTITYSQTSCGANSLNFPSHGKPFSLRLALSPSRGILVIGSIGTGRSYLVKYLATNSYVPFITVFLNKFLDNKPKGFLIDDIDIDASDDIDASDDIDASDDIDASDDIDRDLHTELELLTMDMMPEIDRFYITLQFELAKAMSPCIIWIPNIHDLDVNESNYFSLGLLVNHLSRDCERCSTRNILVIASTHIPQKVDPALIAPNKLNTCIKIRRLLIPQQRKHFFTLSYTRGFRLENKMFHTNGFGSITMGSNARDLVALTNEALSISITQKKSIIDTNTIRSALHRQTWDLRSQVRSVQDHGILFYQIGRAVAQNVLLSNCPIDPISIYMKKKSCNEGDSYLYKWYFELGTSMKKLTILLYLLSCSAGSVAQDLWSLPRPDEKNGITSYGLVENDSDLVHGLLEVEGALVGSSRTEKDCSQFDNDRVTLLLRPEPRNPLDMMQNGSCSILDQRFLYEKNESEFEEGEGEGALDPQQIEEDLFNHIVWAPRIWRPWGFLFDCIERPNELGFPYWSRSFRGKRILYDEEDELQENDSEFLQSGTMQYQTRDRSSKEQGLFRISQFIWDPADPLFFLFKDQPFVSVFSHRELFADEEMSKGLLTSPTDPPTSIYKRWFIKKTQEKHFELLINRQRWFRTNSSLSNGSFRSNTLSESYQYLSNLFLSNGTLLDQMTKTLLRKRWLFPDEMKIGFMEQEKDFPFLSRKDMWP.

The disordered stretch occupies residues 190 to 209 (DSSQLKGSSDQSRDPLDSIS). ATP is bound at residue 1442 to 1449 (GSIGTGRS).

Belongs to the Ycf2 family.

The protein localises to the plastid. It is found in the chloroplast stroma. Functionally, probable ATPase of unknown function. Its presence in a non-photosynthetic plant (Epifagus virginiana) and experiments in tobacco indicate that it has an essential function which is probably not related to photosynthesis. The sequence is that of Protein Ycf2 from Panax ginseng (Korean ginseng).